Consider the following 452-residue polypeptide: Multifunctional glycoside hydrolase (452 aa).

Substrate contacts are provided by glutamine 17, histidine 118, and asparagine 162. Glutamate 163 acts as the Proton donor in catalysis. Tyrosine 303 serves as a coordination point for substrate. Glutamate 361 (nucleophile) is an active-site residue. Substrate-binding positions include tryptophan 407 and 414–415; that span reads EW.

This sequence belongs to the glycosyl hydrolase 1 family. In terms of assembly, monomer. Homotrimer.

The enzyme catalyses Hydrolysis of terminal, non-reducing beta-D-glucosyl residues with release of beta-D-glucose.. It carries out the reaction Hydrolysis of terminal non-reducing beta-D-galactose residues in beta-D-galactosides.. The catalysed reaction is Hydrolysis of (1-&gt;4)-beta-D-xylans, to remove successive D-xylose residues from the non-reducing termini.. It catalyses the reaction Hydrolysis of (1-&gt;4)-linkages in (1-&gt;4)-beta-D-glucans, to remove successive glucose units.. The enzyme catalyses Hydrolysis of (1-&gt;4)-beta-D-glucosidic linkages in cellulose and cellotetraose, releasing cellobiose from the non-reducing ends of the chains.. It participates in glycan metabolism; beta-D-glucan degradation. Its pathway is glycan metabolism; cellulose degradation. Slight activation by Mn(2+), Ni(2+) and K(+). Slight inhibition by Fe(3+), Zn(2+), Co(2+), Mg(2+), Cu(2+), Na(+) and NH4(+). Functionally, has high beta-D-glucosidase, exoglucanase, beta-D-xylosidase, beta-D-galactosidase, and transgalactosylation activities in vitro. Has a very broad substrate specificity with the highest activity with p-nitrophenyl beta-D-galactopyranoside (pNPGal) as substrate. Active with pNP-beta-D-glucopyranoside (pNPGlu), pNP-beta-D-cellobioside (pNPC), lactose, pNP-beta-D-xylopyranoside (pNPX) and cellobiose in the order of decreasing activity, respectively. Very low activity with soluble polysaccharides synanthrin and locust bean gum. Very low, but detectable activity with insoluble substrates such as cotton and filter paper. No activity with pNP-alpha-L-arabinofuranoside (pNPAr) or carboxymethylcellulose (CMC) as substrates. Synthesizes galactooligosaccharides (GalOS) from lactose. Hydrolyzes pretreated corn stover releasing both glucose and xylose. This multifunctional enzyme may provide C.owensensis the benefit of utilizing a wide variety of available carbon sources in its natural growing environment as the ability to convert a wide range of soluble oligosaccharides to monoses is required in order to assimilate them. The polypeptide is Multifunctional glycoside hydrolase (Caldicellulosiruptor owensensis (strain ATCC 700167 / DSM 13100 / OL)).